Here is a 346-residue protein sequence, read N- to C-terminus: Holliday junction branch migration complex subunit RuvB (346 aa).

A large ATPase domain (RuvB-L) region spans residues 1-181 (MSDRNPLIDA…FGIPVRLNFY (181 aa)). ATP-binding positions include L20, R21, G62, K65, T66, T67, 128-130 (EDF), R171, Y181, and R218. T66 contacts Mg(2+). The interval 182-252 (TVEELEYIVR…IADEALSRLE (71 aa)) is small ATPAse domain (RuvB-S). Residues 255-346 (NRGLDQLDRR…SQYGLFMEDE (92 aa)) are head domain (RuvB-H). R291, R310, and R315 together coordinate DNA.

It belongs to the RuvB family. As to quaternary structure, homohexamer. Forms an RuvA(8)-RuvB(12)-Holliday junction (HJ) complex. HJ DNA is sandwiched between 2 RuvA tetramers; dsDNA enters through RuvA and exits via RuvB. An RuvB hexamer assembles on each DNA strand where it exits the tetramer. Each RuvB hexamer is contacted by two RuvA subunits (via domain III) on 2 adjacent RuvB subunits; this complex drives branch migration. In the full resolvosome a probable DNA-RuvA(4)-RuvB(12)-RuvC(2) complex forms which resolves the HJ.

The protein localises to the cytoplasm. It carries out the reaction ATP + H2O = ADP + phosphate + H(+). Its function is as follows. The RuvA-RuvB-RuvC complex processes Holliday junction (HJ) DNA during genetic recombination and DNA repair, while the RuvA-RuvB complex plays an important role in the rescue of blocked DNA replication forks via replication fork reversal (RFR). RuvA specifically binds to HJ cruciform DNA, conferring on it an open structure. The RuvB hexamer acts as an ATP-dependent pump, pulling dsDNA into and through the RuvAB complex. RuvB forms 2 homohexamers on either side of HJ DNA bound by 1 or 2 RuvA tetramers; 4 subunits per hexamer contact DNA at a time. Coordinated motions by a converter formed by DNA-disengaged RuvB subunits stimulates ATP hydrolysis and nucleotide exchange. Immobilization of the converter enables RuvB to convert the ATP-contained energy into a lever motion, pulling 2 nucleotides of DNA out of the RuvA tetramer per ATP hydrolyzed, thus driving DNA branch migration. The RuvB motors rotate together with the DNA substrate, which together with the progressing nucleotide cycle form the mechanistic basis for DNA recombination by continuous HJ branch migration. Branch migration allows RuvC to scan DNA until it finds its consensus sequence, where it cleaves and resolves cruciform DNA. This is Holliday junction branch migration complex subunit RuvB from Brucella melitensis biotype 2 (strain ATCC 23457).